Here is a 364-residue protein sequence, read N- to C-terminus: Leucine dehydrogenase (364 aa).

The active site involves Lys80. 180–186 is a binding site for NAD(+); sequence GVGNVAY.

The protein belongs to the Glu/Leu/Phe/Val dehydrogenases family.

The catalysed reaction is L-leucine + NAD(+) + H2O = 4-methyl-2-oxopentanoate + NH4(+) + NADH + H(+). Its pathway is amino-acid degradation; L-leucine degradation; 4-methyl-2-oxopentanoate from L-leucine (dehydrogenase route): step 1/1. Catalyzes the reversible deamination of L-leucine to 4-methyl-2-oxopentanoate. The protein is Leucine dehydrogenase (yqiT) of Bacillus subtilis (strain 168).